Reading from the N-terminus, the 252-residue chain is Aspartate/glutamate leucyltransferase (252 aa).

This sequence belongs to the R-transferase family. Bpt subfamily.

Its subcellular location is the cytoplasm. The enzyme catalyses N-terminal L-glutamyl-[protein] + L-leucyl-tRNA(Leu) = N-terminal L-leucyl-L-glutamyl-[protein] + tRNA(Leu) + H(+). It catalyses the reaction N-terminal L-aspartyl-[protein] + L-leucyl-tRNA(Leu) = N-terminal L-leucyl-L-aspartyl-[protein] + tRNA(Leu) + H(+). In terms of biological role, functions in the N-end rule pathway of protein degradation where it conjugates Leu from its aminoacyl-tRNA to the N-termini of proteins containing an N-terminal aspartate or glutamate. This Hyphomonas neptunium (strain ATCC 15444) protein is Aspartate/glutamate leucyltransferase.